A 21-amino-acid polypeptide reads, in one-letter code: Fibrinogen beta chain (21 aa).

Glutamine 1 bears the Pyrrolidone carboxylic acid mark. Over residues 1-11 (QPSYDYDEEED) the composition is skewed to acidic residues. Positions 1-21 (QPSYDYDEEEDDRAKLRLDAR) are disordered. Sulfotyrosine is present on tyrosine 6. Over residues 12 to 21 (DRAKLRLDAR) the composition is skewed to basic and acidic residues.

As to quaternary structure, heterohexamer; disulfide linked. Contains 2 sets of 3 non-identical chains (alpha, beta and gamma). The 2 heterotrimers are in head to head conformation with the N-termini in a small central domain. Conversion of fibrinogen to fibrin is triggered by thrombin, which cleaves fibrinopeptides A and B from alpha and beta chains, and thus exposes the N-terminal polymerization sites responsible for the formation of the soft clot.

It is found in the secreted. Functionally, cleaved by the protease thrombin to yield monomers which, together with fibrinogen alpha (FGA) and fibrinogen gamma (FGG), polymerize to form an insoluble fibrin matrix. Fibrin has a major function in hemostasis as one of the primary components of blood clots. In addition, functions during the early stages of wound repair to stabilize the lesion and guide cell migration during re-epithelialization. Was originally thought to be essential for platelet aggregation, based on in vitro studies using anticoagulated blood. However subsequent studies have shown that it is not absolutely required for thrombus formation in vivo. Enhances expression of SELP in activated platelets. Maternal fibrinogen is essential for successful pregnancy. Fibrin deposition is also associated with infection, where it protects against IFNG-mediated hemorrhage. May also facilitate the antibacterial immune response via both innate and T-cell mediated pathways. In Antilocapra americana (Pronghorn), this protein is Fibrinogen beta chain (FGB).